A 133-amino-acid polypeptide reads, in one-letter code: Hydrogenase maturation factor HypA (133 aa).

His2 provides a ligand contact to Ni(2+). Zn(2+) contacts are provided by Cys73, Cys75, Cys105, and Cys108.

Belongs to the HypA/HybF family.

Functionally, involved in the maturation of [NiFe] hydrogenases. Required for nickel insertion into the metal center of the hydrogenase. In Methanosarcina acetivorans (strain ATCC 35395 / DSM 2834 / JCM 12185 / C2A), this protein is Hydrogenase maturation factor HypA.